Here is a 127-residue protein sequence, read N- to C-terminus: MLKSLLVIAIGASLGAWLRWLLGMKLNALFPTIPPGTVVANMVGGYIIGLAIAFLAASPSLSPEWRLLIITGFCGGLTTFSTFSAETVALIQEGRLLWALGSISLHVVGSLAMTAAGLLSYQMIGTR.

Helical transmembrane passes span 4 to 24 (SLLVIAIGASLGAWLRWLLGM), 37 to 57 (TVVANMVGGYIIGLAIAFLAA), 68 to 88 (LIITGFCGGLTTFSTFSAETV), and 96 to 116 (LLWALGSISLHVVGSLAMTAA). The Na(+) site is built by glycine 75 and threonine 78.

Belongs to the fluoride channel Fluc/FEX (TC 1.A.43) family.

The protein localises to the cell inner membrane. The enzyme catalyses fluoride(in) = fluoride(out). With respect to regulation, na(+) is not transported, but it plays an essential structural role and its presence is essential for fluoride channel function. Fluoride-specific ion channel. Important for reducing fluoride concentration in the cell, thus reducing its toxicity. This chain is Fluoride-specific ion channel FluC, found in Pseudomonas syringae pv. maculicola.